The primary structure comprises 214 residues: Probable septum site-determining protein MinC (214 aa).

It belongs to the MinC family. Interacts with MinD and FtsZ.

Functionally, cell division inhibitor that blocks the formation of polar Z ring septums. Rapidly oscillates between the poles of the cell to destabilize FtsZ filaments that have formed before they mature into polar Z rings. Prevents FtsZ polymerization. This is Probable septum site-determining protein MinC from Thermoanaerobacter pseudethanolicus (strain ATCC 33223 / 39E) (Clostridium thermohydrosulfuricum).